Consider the following 68-residue polypeptide: C-hordein (68 aa).

2 stretches are compositionally biased toward pro residues: residues 1 to 24 (YPQQ…PQQP) and 33 to 55 (PQQP…PLQP). Residues 1–68 (YPQQPQPFPQ…YTQQTIWSMV (68 aa)) are disordered. Over residues 59–68 (YTQQTIWSMV) the composition is skewed to polar residues.

As to expression, developing endosperm.

In terms of biological role, sulfur-poor seed storage protein. This is C-hordein from Hordeum vulgare (Barley).